The sequence spans 633 residues: RpoH suppressor (633 aa).

One can recognise a PNPLA domain in the interval 11-410 (LVMKGGITSG…SSNFPIHLFD (400 aa)). 3 helical membrane passes run 38-58 (NIGG…AAVG), 133-153 (IAPV…YAVG), and 159-179 (IAAA…FAVL). Residues 41-45 (GTSAG) carry the GXSXG motif. Ser-43 serves as the catalytic Nucleophile. Residues 342–380 (ARRESLPGSDGENEAEDTTSDEDEQKTVLDSTEALTTGG) form a disordered region. Over residues 352-365 (GENEAEDTTSDEDE) the composition is skewed to acidic residues. The active-site Proton acceptor is the Asp-397. A DGA/G motif is present at residues 397-399 (DGG). The tract at residues 605–624 (EGEKWSGEGPDLTKTAPRPL) is disordered.

It is found in the cell membrane. Functionally, this protein is non-essential for R.meliloti growth, but induces a heat-shock response in temperature-sensitive E.coli K165 by elevating levels of sigma 32 (mechanism unknown). This Rhizobium meliloti (strain 1021) (Ensifer meliloti) protein is RpoH suppressor (suhR).